A 227-amino-acid polypeptide reads, in one-letter code: Triosephosphate isomerase (227 aa).

9–11 (NFK) contributes to the substrate binding site. His-93 functions as the Electrophile in the catalytic mechanism. Glu-141 functions as the Proton acceptor in the catalytic mechanism. Substrate contacts are provided by residues Ile-146, Gly-180, and 201–202 (AS).

This sequence belongs to the triosephosphate isomerase family. As to quaternary structure, homotetramer; dimer of dimers.

The protein resides in the cytoplasm. The catalysed reaction is D-glyceraldehyde 3-phosphate = dihydroxyacetone phosphate. It functions in the pathway carbohydrate biosynthesis; gluconeogenesis. Its pathway is carbohydrate degradation; glycolysis; D-glyceraldehyde 3-phosphate from glycerone phosphate: step 1/1. Functionally, involved in the gluconeogenesis. Catalyzes stereospecifically the conversion of dihydroxyacetone phosphate (DHAP) to D-glyceraldehyde-3-phosphate (G3P). This chain is Triosephosphate isomerase, found in Saccharolobus solfataricus (strain ATCC 35092 / DSM 1617 / JCM 11322 / P2) (Sulfolobus solfataricus).